A 282-amino-acid chain; its full sequence is MKDPDPSQVYRPDMDPEAAKDKGSFRNYTSGPLLDRVFRTYKLMHTWQTVDFVRKKHAQFGGFSYKRMTVLEAVDMLDGLVDESDPDVDFPNSFHAFQTAEGIRKAHPDKDWFHLVGLLHDLGKVLVLAGEPQWAVVGDTFPVGCRPQASVVFCDSTFQDNPDLQDPVYSTELGMYQPHCGLENALMSWGHDEYMYQMMKFNKFSLPGEAFYIIRFHSFYPWHTGGDYRQLCNEQDLAMLPWVQEFNKFDLYTKGSDMPDVDELRPYYQGLIDKYCPGVLCW.

The interval 1–25 (MKDPDPSQVYRPDMDPEAAKDKGSF) is disordered. Over residues 12-24 (PDMDPEAAKDKGS) the composition is skewed to basic and acidic residues. Residue arginine 26 coordinates substrate. Serine 30 carries the post-translational modification Phosphoserine. 82 to 84 (DES) provides a ligand contact to substrate. Fe cation is bound by residues histidine 95, histidine 120, and aspartate 121. Substrate-binding positions include lysine 124 and 138 to 139 (GD). Positions 191, 217, and 250 each coordinate Fe cation. A substrate-binding site is contributed by 217–218 (HS).

Belongs to the myo-inositol oxygenase family. Fe cation serves as cofactor. In terms of processing, the N-terminus is blocked. In terms of tissue distribution, kidney specific.

It is found in the cytoplasm. The enzyme catalyses myo-inositol + O2 = D-glucuronate + H2O + H(+). It functions in the pathway polyol metabolism; myo-inositol degradation into D-glucuronate; D-glucuronate from myo-inositol: step 1/1. In Sus scrofa (Pig), this protein is Inositol oxygenase (MIOX).